We begin with the raw amino-acid sequence, 233 residues long: MQSYVICVNNQCNVYLANNTKQLFDYILTNIDEFRKLFKFMRFTNSPIKKYLSDFYEICLKDSHTNLFDKSEWISTKEKLIERLKLIGYSSFFKRINGIDTDLFSSTNTLGTIRFYKANKTIDADSDYDSNNASENNFDNNDDDDDCYYTNKSLTNENQNEDQDENQNEITEEIDNPINRLLEQKISNGQKMTNSQFMCKMIDIFDSDRTYKNFDLISKLGGKLWILHENIHE.

This is an uncharacterized protein from Acanthamoeba polyphaga (Amoeba).